Here is a 634-residue protein sequence, read N- to C-terminus: Probable potassium transport system protein Kup (634 aa).

Transmembrane regions (helical) follow at residues 19–39, 62–82, 113–133, 150–170, 177–197, 225–245, 259–279, 291–311, 349–369, 379–399, 406–426, and 431–451; these read AIGLMVGAVGVCYGDIGTSPL, VLSLIFWSLVWVVSIKYVIFV, FVVVAGLIGAALFYGDSMITP, GLEHWTVPLALIVLIGLFLIQ, IGILFGPVMVLWFGALAALGV, IGVAILGATVLALTGAEALYA, WFLLVLPALVLNYFGQGATIL, LLAPGWALLPMVALSTLATVI, IYIGGVNWALMVGVVLLVLGF, YGVAVTGTMLITTLLMGVVIW, LWLGVPFFCVMLAVDSLFFAA, and VIQGGAFPVIAGIVIFILMST.

The protein belongs to the HAK/KUP transporter (TC 2.A.72) family.

Its subcellular location is the cell inner membrane. The enzyme catalyses K(+)(in) + H(+)(in) = K(+)(out) + H(+)(out). In terms of biological role, transport of potassium into the cell. Likely operates as a K(+):H(+) symporter. The chain is Probable potassium transport system protein Kup from Pseudomonas aeruginosa (strain UCBPP-PA14).